A 235-amino-acid chain; its full sequence is Protein mxl-3 (235 aa).

The tract at residues 18–49 (EKQFRKRHHSDSSDDDSSSPKSASPSMDDDRR) is disordered. Positions 47–60 (DRRAHHNELERRRR) are basic motif. The 52-residue stretch at 47–98 (DRRAHHNELERRRRDHIKDHFTILKDAIPLLDGEKSSRALILKRAVEFIHVM) folds into the bHLH domain. Residues 61–98 (DHIKDHFTILKDAIPLLDGEKSSRALILKRAVEFIHVM) form a helix-loop-helix motif region.

This sequence belongs to the MAX family. As to quaternary structure, may form homodimer. Interacts (via N-terminus) with skn-1 isoforms a and c. In terms of tissue distribution, expressed in the intestine and in the AWC sensory neurons.

It localises to the nucleus. Its subcellular location is the cytoplasm. Functionally, transcription factor which regulates the expression of genes involved in lipid metabolism in response to nutrient availability. Binds to the E-box motif 5'-CACGTG-3'. Under well-fed conditions, binds to the promoter and represses the expression of lipase genes lipl-1, lipl-2, lipl-3 and to a lesser extent lipl-5, thereby preventing lipolysis. In response to a high-glucose diet, promotes fatty acid synthesis, elongation and desaturation by up-regulating transcription factor sbp-1 expression. Under well-fed conditions, acts remotely in the intestine to up-regulate the expression of chemoreceptor srh-234 gene in the ADL sensory neuron, possibly by regulating the insulin signaling pathway. This Caenorhabditis elegans protein is Protein mxl-3.